The primary structure comprises 189 residues: UPF0398 protein lp_1753 (189 aa).

The protein belongs to the UPF0398 family.

This chain is UPF0398 protein lp_1753, found in Lactiplantibacillus plantarum (strain ATCC BAA-793 / NCIMB 8826 / WCFS1) (Lactobacillus plantarum).